The chain runs to 392 residues: Formate-dependent phosphoribosylglycinamide formyltransferase (392 aa).

N(1)-(5-phospho-beta-D-ribosyl)glycinamide is bound by residues 20-21 and Glu-80; that span reads EL. Residues Arg-112, Lys-153, 158–163, 193–196, and Glu-201 each bind ATP; these read SSGKGQ and EEFI. The ATP-grasp domain occupies 117 to 306; the sequence is RLAAEELGLP…EFELHVRAIL (190 aa). Positions 265 and 277 each coordinate Mg(2+). Residues Asp-284, Lys-354, and 361–362 contribute to the N(1)-(5-phospho-beta-D-ribosyl)glycinamide site; that span reads RR.

The protein belongs to the PurK/PurT family. Homodimer.

The catalysed reaction is N(1)-(5-phospho-beta-D-ribosyl)glycinamide + formate + ATP = N(2)-formyl-N(1)-(5-phospho-beta-D-ribosyl)glycinamide + ADP + phosphate + H(+). The protein operates within purine metabolism; IMP biosynthesis via de novo pathway; N(2)-formyl-N(1)-(5-phospho-D-ribosyl)glycinamide from N(1)-(5-phospho-D-ribosyl)glycinamide (formate route): step 1/1. In terms of biological role, involved in the de novo purine biosynthesis. Catalyzes the transfer of formate to 5-phospho-ribosyl-glycinamide (GAR), producing 5-phospho-ribosyl-N-formylglycinamide (FGAR). Formate is provided by PurU via hydrolysis of 10-formyl-tetrahydrofolate. The protein is Formate-dependent phosphoribosylglycinamide formyltransferase of Geobacter metallireducens (strain ATCC 53774 / DSM 7210 / GS-15).